A 303-amino-acid polypeptide reads, in one-letter code: Proline dehydrogenase 2 (303 aa).

Residue lysine 96 participates in substrate binding. The active site involves aspartate 130. FAD contacts are provided by methionine 131 and glutamine 159. Residue arginine 180 is part of the active site. Residues 183–185 (KGA) and 222–223 (TH) each bind FAD. 284-285 (RR) is a substrate binding site.

It belongs to the proline dehydrogenase family. FAD serves as cofactor.

The catalysed reaction is L-proline + a quinone = (S)-1-pyrroline-5-carboxylate + a quinol + H(+). It participates in amino-acid degradation; L-proline degradation into L-glutamate; L-glutamate from L-proline: step 1/2. Its function is as follows. Converts proline to delta-1-pyrroline-5-carboxylate. Important for the use of proline as a sole carbon and energy source or a sole nitrogen source. This chain is Proline dehydrogenase 2, found in Bacillus subtilis (strain 168).